Here is a 283-residue protein sequence, read N- to C-terminus: uncharacterized protein (283 aa).

Basic and acidic residues predominate over residues 208–232; sequence SMENKVNETQNSKEDEKKKNDGDGK. The interval 208–237 is disordered; sequence SMENKVNETQNSKEDEKKKNDGDGKRSKKK.

This is an uncharacterized protein from Saccharomyces cerevisiae (strain ATCC 204508 / S288c) (Baker's yeast).